Consider the following 223-residue polypeptide: uncharacterized protein (223 aa).

An N-terminal signal peptide occupies residues 1 to 17 (MLGQGLIFISLAFVAHA). An N-linked (GlcNAc...) asparagine glycan is attached at Asn58. A disordered region spans residues 149–188 (VRKKGSRPSKPQKEKQGNKQGSKTEESPNVDEDELESEPE). Positions 159 to 174 (PQKEKQGNKQGSKTEE) are enriched in basic and acidic residues. Residues 176 to 187 (PNVDEDELESEP) show a composition bias toward acidic residues. A helical transmembrane segment spans residues 191–211 (TFFQKYGLYLIPILFLIIMSG).

The protein resides in the endoplasmic reticulum membrane. This is an uncharacterized protein from Schizosaccharomyces pombe (strain 972 / ATCC 24843) (Fission yeast).